Consider the following 226-residue polypeptide: 2-C-methyl-D-erythritol 4-phosphate cytidylyltransferase (226 aa).

The protein belongs to the IspD/TarI cytidylyltransferase family. IspD subfamily.

It catalyses the reaction 2-C-methyl-D-erythritol 4-phosphate + CTP + H(+) = 4-CDP-2-C-methyl-D-erythritol + diphosphate. The protein operates within isoprenoid biosynthesis; isopentenyl diphosphate biosynthesis via DXP pathway; isopentenyl diphosphate from 1-deoxy-D-xylulose 5-phosphate: step 2/6. Functionally, catalyzes the formation of 4-diphosphocytidyl-2-C-methyl-D-erythritol from CTP and 2-C-methyl-D-erythritol 4-phosphate (MEP). The polypeptide is 2-C-methyl-D-erythritol 4-phosphate cytidylyltransferase (Prochlorococcus marinus (strain SARG / CCMP1375 / SS120)).